The following is a 255-amino-acid chain: Hydroxyacylglutathione hydrolase (255 aa).

Zn(2+) contacts are provided by H53, H55, D57, H58, H110, D127, and H165.

The protein belongs to the metallo-beta-lactamase superfamily. Glyoxalase II family. As to quaternary structure, monomer. The cofactor is Zn(2+).

The enzyme catalyses an S-(2-hydroxyacyl)glutathione + H2O = a 2-hydroxy carboxylate + glutathione + H(+). It participates in secondary metabolite metabolism; methylglyoxal degradation; (R)-lactate from methylglyoxal: step 2/2. Functionally, thiolesterase that catalyzes the hydrolysis of S-D-lactoyl-glutathione to form glutathione and D-lactic acid. The protein is Hydroxyacylglutathione hydrolase of Xanthomonas axonopodis pv. citri (strain 306).